The following is a 118-amino-acid chain: Small ribosomal subunit protein uS13 (118 aa).

The tract at residues 94 to 118 (SLPLRGQRTKTNARTRKGPRKPIKR) is disordered.

This sequence belongs to the universal ribosomal protein uS13 family. Part of the 30S ribosomal subunit. Forms a loose heterodimer with protein S19. Forms two bridges to the 50S subunit in the 70S ribosome.

In terms of biological role, located at the top of the head of the 30S subunit, it contacts several helices of the 16S rRNA. In the 70S ribosome it contacts the 23S rRNA (bridge B1a) and protein L5 of the 50S subunit (bridge B1b), connecting the 2 subunits; these bridges are implicated in subunit movement. Contacts the tRNAs in the A and P-sites. This is Small ribosomal subunit protein uS13 from Pseudoalteromonas translucida (strain TAC 125).